A 449-amino-acid polypeptide reads, in one-letter code: VIRF-1 (449 aa).

The interval 1–60 is disordered; it reads MDPGQRPNPFGAPGAIPKKPCLSQGSPGTSGSGAPCDEPSRSESPGEGPSGTGGSAAAGD. Residues 89-195 constitute a DNA-binding region (IRF tryptophan pentad repeat); that stretch reads KASIKDWIVC…HHFLVFRVRK (107 aa). 2 positions are modified to N6-propionyllysine; by host: lysine 406 and lysine 442.

It belongs to the IRF family. In terms of assembly, forms homodimers. Interacts with host IRF3, IRF7, and CREBBP. Interacts with host SYNCRIP. Interacts with host USP7. Interacts (via C-terminus) with host HERC5. Interacts with host GABARAPL1. Interacts with host SIRT6. Post-translationally, ISGylated. In terms of processing, propionylated in lysine residues Lys-406 and Lys-442, which is required for effective inhibition of IFN-beta production and antiviral signaling.

Its subcellular location is the host cytoplasm. Plays a role in the inhibition of host innate response by repressing the expression of interferon-inducible genes and blocking host IRF1- and IRF3-mediated transcription. Blocks the interaction between host IRF3 and CREBBP. Regulates the host cellular metabolism by increasing glucose uptake, ATP production and lactate secretion through down-regulation of heterogeneous nuclear ribonuclear protein Q1/SYNCRIP. Mechanistically, induces ubiquitination and degradation of SYNCRIP through the ubiquitin-proteasome pathway by recruiting KLHL3/CUL3 ubiquitin ligase complex. Disrupts host TP53 signaling pathway during viral infection by interacting with host USP7 and thereby decreasing the availability of USP7 for deubiquitinating and stabilizing TP53. Plays a role in the global inhibition of protein ISGylation by interacting with host HERC5 leading to its inhibition. Promotes its own propionylation by blocking SIRT6 interaction with ubiquitin-specific peptidase 10/USP10 leading to SIRT6 degradation via a ubiquitin-proteasome pathway. In turn, propionylation is required to block IRF3-CBP/p300 recruitment and to repress the STING DNA sensing pathway. Plays a role in the activation of mitophagy during infection via interaction with the host proteins NIX/BNIP3L, TUFM and GABARAPL1 thereby inhibiting antiviral responses and contributing to productive replication. This Homo sapiens (Human) protein is VIRF-1 (vIRF-1).